Reading from the N-terminus, the 144-residue chain is Large ribosomal subunit protein uL15 (144 aa).

Positions 1–52 are disordered; sequence MIKLESLQDPSPRKRRKKLLGRGPGSGHGKTSGRGHKGDGSRSGYKRRFGYE. The span at 22–32 shows a compositional bias: gly residues; sequence RGPGSGHGKTS.

It belongs to the universal ribosomal protein uL15 family. Part of the 50S ribosomal subunit.

Its function is as follows. Binds to the 23S rRNA. The sequence is that of Large ribosomal subunit protein uL15 from Chlamydia felis (strain Fe/C-56) (Chlamydophila felis).